Here is a 115-residue protein sequence, read N- to C-terminus: U3-lycotoxin-Ls1k (115 aa).

A signal peptide spans 1–20 (MKFVLLFGVLLVTLFSYSSA). The propeptide occupies 21 to 44 (EMFDDFDQADEDELLSLIEKEEAR). 4 disulfide bridges follow: cysteine 48–cysteine 63, cysteine 55–cysteine 72, cysteine 62–cysteine 87, and cysteine 74–cysteine 85.

This sequence belongs to the neurotoxin 19 (CSTX) family. 01 subfamily. As to expression, expressed by the venom gland.

It localises to the secreted. This Lycosa singoriensis (Wolf spider) protein is U3-lycotoxin-Ls1k.